The following is a 549-amino-acid chain: DNA ligase 1 (549 aa).

Glu212 contacts ATP. Lys214 acts as the N6-AMP-lysine intermediate in catalysis. ATP-binding residues include Arg219, Arg234, Glu264, Phe310, Arg387, and Lys393.

The protein belongs to the ATP-dependent DNA ligase family. The cofactor is Mg(2+).

The catalysed reaction is ATP + (deoxyribonucleotide)n-3'-hydroxyl + 5'-phospho-(deoxyribonucleotide)m = (deoxyribonucleotide)n+m + AMP + diphosphate.. In terms of biological role, DNA ligase that seals nicks in double-stranded DNA during DNA replication, DNA recombination and DNA repair. This Methanosarcina barkeri (strain Fusaro / DSM 804) protein is DNA ligase 1.